Consider the following 418-residue polypeptide: Pyruvate kinase isozyme G, chloroplastic (418 aa).

Positions 14 and 15 each coordinate K(+). Arginine 21 is a binding site for ATP. Residue glutamate 165 participates in Mg(2+) binding. Substrate-binding residues include glycine 188, aspartate 189, and threonine 221. Mg(2+) is bound at residue aspartate 189.

The protein belongs to the pyruvate kinase family. It depends on Mg(2+) as a cofactor. Requires K(+) as cofactor. Expressed in developing and germinating endosperm and in roots.

The protein resides in the plastid. It localises to the chloroplast. The enzyme catalyses pyruvate + ATP = phosphoenolpyruvate + ADP + H(+). The protein operates within carbohydrate degradation; glycolysis; pyruvate from D-glyceraldehyde 3-phosphate: step 5/5. The sequence is that of Pyruvate kinase isozyme G, chloroplastic from Ricinus communis (Castor bean).